Here is an 87-residue protein sequence, read N- to C-terminus: Putative defensin-like protein 169 (87 aa).

A signal peptide spans 1–21 (MKKTFSFTVLILFVIPLLVTG). Intrachain disulfides connect cysteine 36/cysteine 86, cysteine 48/cysteine 74, cysteine 53/cysteine 80, and cysteine 57/cysteine 82.

The protein belongs to the DEFL family.

The protein resides in the secreted. This Arabidopsis thaliana (Mouse-ear cress) protein is Putative defensin-like protein 169.